The following is a 77-amino-acid chain: Probable Fe(2+)-trafficking protein (77 aa).

This sequence belongs to the Fe(2+)-trafficking protein family.

Functionally, could be a mediator in iron transactions between iron acquisition and iron-requiring processes, such as synthesis and/or repair of Fe-S clusters in biosynthetic enzymes. This chain is Probable Fe(2+)-trafficking protein, found in Baumannia cicadellinicola subsp. Homalodisca coagulata.